The sequence spans 404 residues: Probable thioredoxin reductase ARB_06224 (404 aa).

A signal peptide spans 1 to 22 (MGVQRLALALIAFTSALTSVIA). Residue 67–75 (DEGIYRNGA) participates in FAD binding. Residues Cys172 and Cys175 are joined by a disulfide bond. N-linked (GlcNAc...) asparagine glycosylation occurs at Asn213. Residue 334–343 (DANNDGSTNG) coordinates FAD.

This sequence belongs to the class-II pyridine nucleotide-disulfide oxidoreductase family. As to quaternary structure, homodimer. The cofactor is FAD.

Its subcellular location is the secreted. It carries out the reaction [thioredoxin]-dithiol + NADP(+) = [thioredoxin]-disulfide + NADPH + H(+). This is Probable thioredoxin reductase ARB_06224 from Arthroderma benhamiae (strain ATCC MYA-4681 / CBS 112371) (Trichophyton mentagrophytes).